Consider the following 161-residue polypeptide: uncharacterized protein (161 aa).

The next 2 helical transmembrane spans lie at 13-35 (VAAV…PHAN) and 40-62 (VFSA…PFIS).

It is found in the cell membrane. This is an uncharacterized protein from Archaeoglobus fulgidus (strain ATCC 49558 / DSM 4304 / JCM 9628 / NBRC 100126 / VC-16).